The sequence spans 425 residues: Serine--tRNA ligase (425 aa).

230–232 (TAE) provides a ligand contact to L-serine. ATP is bound at residue 261 to 263 (RSE). Residue Glu284 coordinates L-serine. ATP is bound at residue 348–351 (EISS). Position 384 (Ser384) interacts with L-serine.

This sequence belongs to the class-II aminoacyl-tRNA synthetase family. Type-1 seryl-tRNA synthetase subfamily. As to quaternary structure, homodimer. The tRNA molecule binds across the dimer.

The protein localises to the cytoplasm. The catalysed reaction is tRNA(Ser) + L-serine + ATP = L-seryl-tRNA(Ser) + AMP + diphosphate + H(+). It carries out the reaction tRNA(Sec) + L-serine + ATP = L-seryl-tRNA(Sec) + AMP + diphosphate + H(+). Its pathway is aminoacyl-tRNA biosynthesis; selenocysteinyl-tRNA(Sec) biosynthesis; L-seryl-tRNA(Sec) from L-serine and tRNA(Sec): step 1/1. Its function is as follows. Catalyzes the attachment of serine to tRNA(Ser). Is also able to aminoacylate tRNA(Sec) with serine, to form the misacylated tRNA L-seryl-tRNA(Sec), which will be further converted into selenocysteinyl-tRNA(Sec). In Streptococcus pyogenes serotype M5 (strain Manfredo), this protein is Serine--tRNA ligase.